A 470-amino-acid chain; its full sequence is Glutamate--tRNA ligase (470 aa).

Residues 9–19 (PSPTGFLHVGG) carry the 'HIGH' region motif. A 'KMSKS' region motif is present at residues 236–240 (RLSKR). Residue K239 coordinates ATP.

Belongs to the class-I aminoacyl-tRNA synthetase family. Glutamate--tRNA ligase type 1 subfamily. Monomer.

It localises to the cytoplasm. The enzyme catalyses tRNA(Glu) + L-glutamate + ATP = L-glutamyl-tRNA(Glu) + AMP + diphosphate. Catalyzes the attachment of glutamate to tRNA(Glu) in a two-step reaction: glutamate is first activated by ATP to form Glu-AMP and then transferred to the acceptor end of tRNA(Glu). The sequence is that of Glutamate--tRNA ligase from Legionella pneumophila (strain Lens).